Reading from the N-terminus, the 262-residue chain is Flap endonuclease Xni (262 aa).

Asp105 contacts Mg(2+). Positions 164-251 constitute a 5'-3' exonuclease domain; that stretch reads SQFLDLMALA…NINLKDFRAN (88 aa). Positions 172, 173, 181, 183, and 186 each coordinate K(+). The segment at 185–190 is interaction with DNA; the sequence is GIGPKS.

It belongs to the Xni family. Requires Mg(2+) as cofactor. K(+) serves as cofactor.

In terms of biological role, has flap endonuclease activity. During DNA replication, flap endonucleases cleave the 5'-overhanging flap structure that is generated by displacement synthesis when DNA polymerase encounters the 5'-end of a downstream Okazaki fragment. The protein is Flap endonuclease Xni of Shewanella sp. (strain W3-18-1).